The sequence spans 154 residues: Endoribonuclease YbeY (154 aa).

3 residues coordinate Zn(2+): His114, His118, and His124.

The protein belongs to the endoribonuclease YbeY family. Zn(2+) is required as a cofactor.

It localises to the cytoplasm. Functionally, single strand-specific metallo-endoribonuclease involved in late-stage 70S ribosome quality control and in maturation of the 3' terminus of the 16S rRNA. The sequence is that of Endoribonuclease YbeY from Histophilus somni (strain 2336) (Haemophilus somnus).